Consider the following 1330-residue polypeptide: Sister chromatid cohesion protein PDS5 homolog A (1330 aa).

One copy of the HEAT repeat lies at 387–423 (SLVNDQLLGFVRERTLDKRWRVRKEAMMGLAQLYKKY). Positions 1138-1330 (VNKPLSATGR…AAQRQIDLQR (193 aa)) are disordered. Low complexity predominate over residues 1160–1171 (SNISVNSELSSS). The span at 1216-1225 (SDQATQGNST) shows a compositional bias: polar residues.

It belongs to the PDS5 family. As to quaternary structure, interacts with the cohesin complex. Binds chromatin in a cohesin-dependent manner.

It localises to the nucleus. In terms of biological role, may regulate sister chromatid cohesion during mitosis and couple it to DNA replication. The protein is Sister chromatid cohesion protein PDS5 homolog A of Gallus gallus (Chicken).